Consider the following 710-residue polypeptide: Polyribonucleotide nucleotidyltransferase (710 aa).

Residues aspartate 488 and aspartate 494 each contribute to the Mg(2+) site. Residues 555-614 (PRIETITIPTDKIRDVIGSGGKVIREIVETTGAKVDVNDDGVIKVSSSDGASIKAALDWI) form the KH domain. Residues 624 to 692 (GQIYKGKVVK…DRGKVRLSMK (69 aa)) enclose the S1 motif domain.

The protein belongs to the polyribonucleotide nucleotidyltransferase family. It depends on Mg(2+) as a cofactor.

The protein resides in the cytoplasm. It carries out the reaction RNA(n+1) + phosphate = RNA(n) + a ribonucleoside 5'-diphosphate. In terms of biological role, involved in mRNA degradation. Catalyzes the phosphorolysis of single-stranded polyribonucleotides processively in the 3'- to 5'-direction. The chain is Polyribonucleotide nucleotidyltransferase from Maricaulis maris (strain MCS10) (Caulobacter maris).